The sequence spans 308 residues: Ribosomal RNA small subunit methyltransferase H (308 aa).

Residues 35–37, aspartate 54, phenylalanine 80, aspartate 101, and glutamine 108 contribute to the S-adenosyl-L-methionine site; that span reads GGH.

This sequence belongs to the methyltransferase superfamily. RsmH family.

The protein localises to the cytoplasm. The enzyme catalyses cytidine(1402) in 16S rRNA + S-adenosyl-L-methionine = N(4)-methylcytidine(1402) in 16S rRNA + S-adenosyl-L-homocysteine + H(+). Specifically methylates the N4 position of cytidine in position 1402 (C1402) of 16S rRNA. The chain is Ribosomal RNA small subunit methyltransferase H from Mycoplasma pneumoniae (strain ATCC 29342 / M129 / Subtype 1) (Mycoplasmoides pneumoniae).